The sequence spans 70 residues: Exodeoxyribonuclease 7 small subunit (70 aa).

It belongs to the XseB family. As to quaternary structure, heterooligomer composed of large and small subunits.

It is found in the cytoplasm. The enzyme catalyses Exonucleolytic cleavage in either 5'- to 3'- or 3'- to 5'-direction to yield nucleoside 5'-phosphates.. In terms of biological role, bidirectionally degrades single-stranded DNA into large acid-insoluble oligonucleotides, which are then degraded further into small acid-soluble oligonucleotides. The polypeptide is Exodeoxyribonuclease 7 small subunit (Streptococcus gordonii (strain Challis / ATCC 35105 / BCRC 15272 / CH1 / DL1 / V288)).